A 200-amino-acid chain; its full sequence is HTH-type transcriptional regulator Hpr (200 aa).

The 145-residue stretch at 13 to 157 (AMLFSQRIAQ…MMCIVRNIYG (145 aa)) folds into the HTH marR-type domain. Positions 63–86 (ISEIAKFGVMHVSTAFNFSKKLEE) form a DNA-binding region, H-T-H motif.

In terms of assembly, homodimer.

Negative regulator of protease production and sporulation. In Geobacillus thermodenitrificans (strain NG80-2), this protein is HTH-type transcriptional regulator Hpr.